A 96-amino-acid polypeptide reads, in one-letter code: MTATLLTAEQLSSVAEKLPGWTLADQRLQRQWRFRNFVEAFGFMTRVALLAEAMNHHPEWSNVYATVTIELTTHDVNGLSDRDLKLAEAINLLEPG.

The protein belongs to the pterin-4-alpha-carbinolamine dehydratase family.

It carries out the reaction (4aS,6R)-4a-hydroxy-L-erythro-5,6,7,8-tetrahydrobiopterin = (6R)-L-erythro-6,7-dihydrobiopterin + H2O. The polypeptide is Putative pterin-4-alpha-carbinolamine dehydratase (Prochlorococcus marinus (strain MIT 9313)).